Here is a 208-residue protein sequence, read N- to C-terminus: dITP/XTP pyrophosphatase (208 aa).

16–21 (SNNKGK) provides a ligand contact to substrate. Catalysis depends on Asp79, which acts as the Proton acceptor. Position 79 (Asp79) interacts with Mg(2+). Substrate is bound by residues Ser80, 166–169 (FGYD), Lys189, and 194–195 (HR).

This sequence belongs to the HAM1 NTPase family. Homodimer. Requires Mg(2+) as cofactor.

The catalysed reaction is XTP + H2O = XMP + diphosphate + H(+). The enzyme catalyses dITP + H2O = dIMP + diphosphate + H(+). It carries out the reaction ITP + H2O = IMP + diphosphate + H(+). Pyrophosphatase that catalyzes the hydrolysis of nucleoside triphosphates to their monophosphate derivatives, with a high preference for the non-canonical purine nucleotides XTP (xanthosine triphosphate), dITP (deoxyinosine triphosphate) and ITP. Seems to function as a house-cleaning enzyme that removes non-canonical purine nucleotides from the nucleotide pool, thus preventing their incorporation into DNA/RNA and avoiding chromosomal lesions. This is dITP/XTP pyrophosphatase from Acinetobacter baumannii (strain ACICU).